A 323-amino-acid chain; its full sequence is MKTTFLDFEQPIAELEAKIEELRFVQDDSAVDISEEIERLSKKSQQLTKDLYANLTPWQVSQIARHPQRPYTFDYVNELFTDFHELHGDRNYADDLSIVGGLARFNGQACMVIGHQKGRDTKERALRNFGMPRPEGYRKAERLMRLAEKFGLPIFTFIDTPGAYPGIGAEERGQSEAIGRNLYVMAELKTPLIATIIGEGGSGGALAIAVGDSVLMLQFSTYSVISPEGCASILWKSAAKAPEAAEALGLTAHRLKALGLIDKIVNEPLGGAHRDPKGMAAMLRRALADSLRQFQGMSINDLRQRRFERLMSYGKFKETTPGA.

Residues 39-293 (RLSKKSQQLT…RRALADSLRQ (255 aa)) form the CoA carboxyltransferase C-terminal domain.

Belongs to the AccA family. As to quaternary structure, acetyl-CoA carboxylase is a heterohexamer composed of biotin carboxyl carrier protein (AccB), biotin carboxylase (AccC) and two subunits each of ACCase subunit alpha (AccA) and ACCase subunit beta (AccD).

Its subcellular location is the cytoplasm. The catalysed reaction is N(6)-carboxybiotinyl-L-lysyl-[protein] + acetyl-CoA = N(6)-biotinyl-L-lysyl-[protein] + malonyl-CoA. It participates in lipid metabolism; malonyl-CoA biosynthesis; malonyl-CoA from acetyl-CoA: step 1/1. Its function is as follows. Component of the acetyl coenzyme A carboxylase (ACC) complex. First, biotin carboxylase catalyzes the carboxylation of biotin on its carrier protein (BCCP) and then the CO(2) group is transferred by the carboxyltransferase to acetyl-CoA to form malonyl-CoA. The protein is Acetyl-coenzyme A carboxylase carboxyl transferase subunit alpha of Paraburkholderia phytofirmans (strain DSM 17436 / LMG 22146 / PsJN) (Burkholderia phytofirmans).